Consider the following 388-residue polypeptide: L-lactate dehydrogenase (388 aa).

Residues 1-380 (MIISAASDYR…SADALSRVTR (380 aa)) form the FMN hydroxy acid dehydrogenase domain. A substrate-binding site is contributed by Y24. S106 and Q127 together coordinate FMN. Y129 contributes to the substrate binding site. Residue T155 coordinates FMN. Residue R164 participates in substrate binding. An FMN-binding site is contributed by K251. H275 serves as the catalytic Proton acceptor. R278 is a substrate binding site. 306-330 (DSGIRSGLDVVRMLALGADAVLLGR) serves as a coordination point for FMN.

This sequence belongs to the FMN-dependent alpha-hydroxy acid dehydrogenase family. It depends on FMN as a cofactor.

It is found in the cell inner membrane. The enzyme catalyses (S)-lactate + A = pyruvate + AH2. Catalyzes the conversion of L-lactate to pyruvate. Is coupled to the respiratory chain. This chain is L-lactate dehydrogenase, found in Xanthomonas oryzae pv. oryzae (strain MAFF 311018).